We begin with the raw amino-acid sequence, 210 residues long: MKPYIIGISGISGSGKSTFAANLKTKCGDFYAGDVVIINLDGFYRSINEDDMCLVKAGEYNFDHPYAIDLDHARRCISAIADGHLVAVPIYDFEKKKCVGHYEVNNPRVVIVEGIHALHPKLFPLYDITAFLEVPMSVALSRRAVRDNKERGRTPEDTAEMFRKFVLPMYKLHVEPNVKKAAILVNGLNTGVHINMLYEHIKPLLIYPRF.

10-18 (GISGSGKST) serves as a coordination point for ATP. Residue Asp41 is part of the active site.

It belongs to the uridine kinase family. As to quaternary structure, interacts with host eIF-2B; this interaction disrupts the interaction between eIF2 and eIF-2B, which leads to the inhibition of stress granules formation.

Its subcellular location is the host cytoplasm. It is found in the host perinuclear region. The catalysed reaction is uridine + ATP = UMP + ADP + H(+). In terms of biological role, inhibits the integrated stress response (ISR) in the infected cell by preventing the sequestration of eIF2B by phosphorylated EIF2S1/eIF-2alpha. Stress granule formation in response to EIF2S1/eIF-2alpha phosphorylation is thus inhibited, which allows protein synthesis and viral replication. Phosphorylates uridine to uridine monophosphate. This Beluga whale coronavirus (strain SW1) (BwCoV) protein is Uridine kinase P10 (ORF10).